We begin with the raw amino-acid sequence, 82 residues long: Small ribosomal subunit protein bS16 (82 aa).

Belongs to the bacterial ribosomal protein bS16 family.

This is Small ribosomal subunit protein bS16 from Synechocystis sp. (strain ATCC 27184 / PCC 6803 / Kazusa).